We begin with the raw amino-acid sequence, 577 residues long: Arginine--tRNA ligase (577 aa).

The 'HIGH' region motif lies at 132-142; the sequence is ANPTGPLHVGH.

This sequence belongs to the class-I aminoacyl-tRNA synthetase family. As to quaternary structure, monomer.

Its subcellular location is the cytoplasm. It catalyses the reaction tRNA(Arg) + L-arginine + ATP = L-arginyl-tRNA(Arg) + AMP + diphosphate. The chain is Arginine--tRNA ligase from Pelagibacter ubique (strain HTCC1062).